We begin with the raw amino-acid sequence, 103 residues long: ATP-dependent Clp protease adapter protein ClpS (103 aa).

This sequence belongs to the ClpS family. In terms of assembly, binds to the N-terminal domain of the chaperone ClpA.

Its function is as follows. Involved in the modulation of the specificity of the ClpAP-mediated ATP-dependent protein degradation. This is ATP-dependent Clp protease adapter protein ClpS from Neisseria meningitidis serogroup A / serotype 4A (strain DSM 15465 / Z2491).